The primary structure comprises 449 residues: Interferon-related developmental regulator 1 (449 aa).

Positions 1–10 (MPKNKKRNAP) are enriched in basic residues. Residues 1–42 (MPKNKKRNAPHRGGGGGGGSGAATSAATAGGPHRTVQPFSDE) are disordered. The segment covering 12-21 (RGGGGGGGSG) has biased composition (gly residues). The span at 22–31 (AATSAATAGG) shows a compositional bias: low complexity.

This sequence belongs to the IFRD family. In terms of assembly, interacts with PSIP1/LEDGF.

In terms of biological role, could play a role in regulating gene activity in the proliferative and/or differentiative pathways induced by NGF. May be an autocrine factor that attenuates or amplifies the initial ligand-induced signal. This Mus musculus (Mouse) protein is Interferon-related developmental regulator 1 (Ifrd1).